Reading from the N-terminus, the 603-residue chain is ATP-dependent zinc metalloprotease FtsH (603 aa).

Residues 1–2 (MK) are Stromal-facing. The chain crosses the membrane as a helical span at residues 3 to 23 (NLWIWSLPLIVLAFIGWQELA). Topologically, residues 24 to 101 (NQMPVATSRM…DVDVHAVSNW (78 aa)) are lumenal. The chain crosses the membrane as a helical span at residues 102–122 (INVASNWIIPLIIIGVVIWLL). At 123–603 (SRSASSNTTG…SQAARLTAVN (481 aa)) the chain is on the stromal side. 194-201 (GPPGTGKT) lines the ATP pocket. Residue His-415 participates in Zn(2+) binding. Glu-416 is a catalytic residue. Residues His-419 and Asp-493 each coordinate Zn(2+).

In the central section; belongs to the AAA ATPase family. It in the C-terminal section; belongs to the peptidase M41 family. Homohexamer. Requires Zn(2+) as cofactor.

It localises to the plastid. The protein localises to the chloroplast thylakoid membrane. Functionally, acts as a processive, ATP-dependent zinc metallopeptidase. This Cyanidioschyzon merolae (strain NIES-3377 / 10D) (Unicellular red alga) protein is ATP-dependent zinc metalloprotease FtsH.